Reading from the N-terminus, the 246-residue chain is Anionic trypsin-2 (246 aa).

Positions 1–15 (MSALLILALVGAAVA) are cleaved as a signal peptide. Positions 16–23 (FPVDDDDK) are cleaved as a propeptide — activation peptide. In terms of domain architecture, Peptidase S1 spans 24–244 (IVGGYTCRES…YVDWIQNTIA (221 aa)). Cystine bridges form between Cys30-Cys160, Cys48-Cys64, Cys132-Cys233, Cys139-Cys206, Cys171-Cys185, and Cys196-Cys220. Residue His63 is the Charge relay system of the active site. Ca(2+) contacts are provided by Glu75, Asn77, Val80, and Glu85. The Charge relay system role is filled by Asp107. Ser200 (charge relay system) is an active-site residue.

It belongs to the peptidase S1 family. Requires Ca(2+) as cofactor. As to expression, expressed in the pancreas, lung and kidney.

It is found in the secreted. Its subcellular location is the extracellular space. It catalyses the reaction Preferential cleavage: Arg-|-Xaa, Lys-|-Xaa.. The polypeptide is Anionic trypsin-2 (Prss2) (Mus musculus (Mouse)).